Here is a 508-residue protein sequence, read N- to C-terminus: Histidine ammonia-lyase (508 aa).

Residues 143–145 constitute a cross-link (5-imidazolinone (Ala-Gly)); the sequence is ASG. S144 is modified (2,3-didehydroalanine (Ser)).

The protein belongs to the PAL/histidase family. Post-translationally, contains an active site 4-methylidene-imidazol-5-one (MIO), which is formed autocatalytically by cyclization and dehydration of residues Ala-Ser-Gly.

It localises to the cytoplasm. The enzyme catalyses L-histidine = trans-urocanate + NH4(+). It participates in amino-acid degradation; L-histidine degradation into L-glutamate; N-formimidoyl-L-glutamate from L-histidine: step 1/3. The sequence is that of Histidine ammonia-lyase from Caldanaerobacter subterraneus subsp. tengcongensis (strain DSM 15242 / JCM 11007 / NBRC 100824 / MB4) (Thermoanaerobacter tengcongensis).